Reading from the N-terminus, the 1162-residue chain is DNA-directed RNA polymerase subunit beta (1162 aa).

This sequence belongs to the RNA polymerase beta chain family. The RNAP catalytic core consists of 2 alpha, 1 beta, 1 beta' and 1 omega subunit. When a sigma factor is associated with the core the holoenzyme is formed, which can initiate transcription.

It catalyses the reaction RNA(n) + a ribonucleoside 5'-triphosphate = RNA(n+1) + diphosphate. DNA-dependent RNA polymerase catalyzes the transcription of DNA into RNA using the four ribonucleoside triphosphates as substrates. The polypeptide is DNA-directed RNA polymerase subunit beta (Clavibacter michiganensis subsp. michiganensis (strain NCPPB 382)).